Reading from the N-terminus, the 369-residue chain is 3-isopropylmalate dehydrogenase (369 aa).

Substrate contacts are provided by arginine 98, arginine 108, arginine 136, and aspartate 227. Aspartate 227, aspartate 251, and aspartate 255 together coordinate Mg(2+). 290-302 (GSAPDIAGKGIAN) contacts NAD(+).

This sequence belongs to the isocitrate and isopropylmalate dehydrogenases family. LeuB type 1 subfamily. Homodimer. The cofactor is Mg(2+). Mn(2+) serves as cofactor.

It is found in the cytoplasm. The enzyme catalyses (2R,3S)-3-isopropylmalate + NAD(+) = 4-methyl-2-oxopentanoate + CO2 + NADH. It participates in amino-acid biosynthesis; L-leucine biosynthesis; L-leucine from 3-methyl-2-oxobutanoate: step 3/4. Its function is as follows. Catalyzes the oxidation of 3-carboxy-2-hydroxy-4-methylpentanoate (3-isopropylmalate) to 3-carboxy-4-methyl-2-oxopentanoate. The product decarboxylates to 4-methyl-2 oxopentanoate. This is 3-isopropylmalate dehydrogenase from Gluconobacter oxydans (strain 621H) (Gluconobacter suboxydans).